We begin with the raw amino-acid sequence, 279 residues long: Acyl-[acyl-carrier-protein]--UDP-N-acetylglucosamine O-acyltransferase (279 aa).

Residues isoleucine 256–serine 279 form a disordered region.

It belongs to the transferase hexapeptide repeat family. LpxA subfamily. Homotrimer.

It localises to the cytoplasm. It catalyses the reaction a (3R)-hydroxyacyl-[ACP] + UDP-N-acetyl-alpha-D-glucosamine = a UDP-3-O-[(3R)-3-hydroxyacyl]-N-acetyl-alpha-D-glucosamine + holo-[ACP]. It participates in glycolipid biosynthesis; lipid IV(A) biosynthesis; lipid IV(A) from (3R)-3-hydroxytetradecanoyl-[acyl-carrier-protein] and UDP-N-acetyl-alpha-D-glucosamine: step 1/6. Involved in the biosynthesis of lipid A, a phosphorylated glycolipid that anchors the lipopolysaccharide to the outer membrane of the cell. In Chlamydia caviae (strain ATCC VR-813 / DSM 19441 / 03DC25 / GPIC) (Chlamydophila caviae), this protein is Acyl-[acyl-carrier-protein]--UDP-N-acetylglucosamine O-acyltransferase.